A 155-amino-acid polypeptide reads, in one-letter code: Deoxyuridine 5'-triphosphate nucleotidohydrolase (155 aa).

Substrate contacts are provided by residues 75–77, N88, and 92–94; these read RSG and TVD.

This sequence belongs to the dUTPase family. The cofactor is Mg(2+).

The catalysed reaction is dUTP + H2O = dUMP + diphosphate + H(+). Its pathway is pyrimidine metabolism; dUMP biosynthesis; dUMP from dCTP (dUTP route): step 2/2. This enzyme is involved in nucleotide metabolism: it produces dUMP, the immediate precursor of thymidine nucleotides and it decreases the intracellular concentration of dUTP so that uracil cannot be incorporated into DNA. The chain is Deoxyuridine 5'-triphosphate nucleotidohydrolase from Caulobacter vibrioides (strain ATCC 19089 / CIP 103742 / CB 15) (Caulobacter crescentus).